The following is a 66-amino-acid chain: MEHSLNSLNNFDFLARSFARMHAEGRPVDILAVTGNMDEEHRTWFCARYAWYCQQMMQTRELELEH.

This sequence belongs to the GlgS family.

Its function is as follows. Major determinant of cell surface composition. Negatively regulates motility, adhesion and synthesis of biofilm exopolysaccharides. This is Surface composition regulator from Shigella dysenteriae serotype 1 (strain Sd197).